Consider the following 555-residue polypeptide: MSTSIGDNETGAIVSNENVEFSVDFRGNPSIRSSSGAWKSSGFTMCAEVAEKFAYFGIASNLITYFTEALGESTAVAASNVNLWLGTAAFLPLIWGSIADSFLGRFRTILLTSSFYIMGLGLLTFSATIPSLCNDQETRESCVSQVKVIIFFCALYLIALGEGGFKVCLRAFGADQFDEQDPNESKAKSSYFNWLYFAISIGILTTRLVTNYVQENLSWALGYAIPCLSMMLALFLFLLGIKTYRFSTGGEGRQGKKHDNPFVRIGRVFVAAARNRRQTPSDTCLLLPNESTKKFRFLDRAVISCDSYEVEEAKAVLSLIPIWLCSLVFGIVFAQSPTFFTKQGSTMDRSISSTLQVPAATLQCFISLAILVFIPIYDRLFVPIARSITRKPAGITTLQRISTGIFLSIISMVIAALVEMKRLKTARDHGLVDSPKATVPMSVCWLIPQYILFGVSDVFTMVGLQEFFYGEVPPQLRSMGLALYLSIIGIGNFLSSFMVSVIEEATSQSGQVSWFSNNLNQAHLDYFYWLLACLSSLAFIFTVYFAKSYLYNSPK.

Transmembrane regions (helical) follow at residues 53–73 and 83–103; these read FAYF…LGES and LWLG…DSFL. At Thr-108 the chain carries Phosphothreonine. Helical transmembrane passes span 109–129, 148–168, 190–210, 221–241, 315–335, 357–377, 401–421, 443–463, 482–502, and 526–546; these read ILLT…SATI, VIIF…FKVC, SYFN…RLVT, LGYA…LLGI, AVLS…VFAQ, VPAA…IPIY, ISTG…VEMK, VCWL…TMVG, ALYL…VSVI, and YFYW…VYFA.

Belongs to the major facilitator superfamily. Proton-dependent oligopeptide transporter (POT/PTR) (TC 2.A.17) family. In terms of tissue distribution, expressed in shoots and roots.

The protein localises to the membrane. The protein is Protein NRT1/ PTR FAMILY 5.12 (NPF5.12) of Arabidopsis thaliana (Mouse-ear cress).